Reading from the N-terminus, the 327-residue chain is GMP reductase (327 aa).

The active-site Thioimidate intermediate is the Cys-175. Residue 204–227 coordinates NADP(+); sequence IIADGGIRTNGDVAKSIRFGATMV.

This sequence belongs to the IMPDH/GMPR family. GuaC type 2 subfamily.

It catalyses the reaction IMP + NH4(+) + NADP(+) = GMP + NADPH + 2 H(+). Functionally, catalyzes the irreversible NADPH-dependent deamination of GMP to IMP. It functions in the conversion of nucleobase, nucleoside and nucleotide derivatives of G to A nucleotides, and in maintaining the intracellular balance of A and G nucleotides. This Bacillus anthracis protein is GMP reductase.